The chain runs to 121 residues: MARIAGVDIPREKRIVISLTYVYGIGTTTANKIAEEANVSPETRVKDLTDDELGRIREIVDNYKVEGDLRREQNLNIKRLMEISSYRGIRHRRGLPVRGQKTKNNARTRKGPVKTVANKKK.

The segment at His-91–Lys-121 is disordered.

It belongs to the universal ribosomal protein uS13 family. In terms of assembly, part of the 30S ribosomal subunit. Forms a loose heterodimer with protein S19. Forms two bridges to the 50S subunit in the 70S ribosome.

Its function is as follows. Located at the top of the head of the 30S subunit, it contacts several helices of the 16S rRNA. In the 70S ribosome it contacts the 23S rRNA (bridge B1a) and protein L5 of the 50S subunit (bridge B1b), connecting the 2 subunits; these bridges are implicated in subunit movement. Contacts the tRNAs in the A and P-sites. This chain is Small ribosomal subunit protein uS13, found in Staphylococcus saprophyticus subsp. saprophyticus (strain ATCC 15305 / DSM 20229 / NCIMB 8711 / NCTC 7292 / S-41).